Here is a 438-residue protein sequence, read N- to C-terminus: Tyrosine--tRNA ligase (438 aa).

Tyrosine 47 is a binding site for L-tyrosine. Positions 52–61 (PTATSLHVGG) match the 'HIGH' region motif. Residues tyrosine 183 and glutamine 187 each contribute to the L-tyrosine site. The 'KMSKS' region motif lies at 243–247 (KMGKT). Lysine 246 is a binding site for ATP. The region spanning 370 to 436 (LWIVEALQTA…GKRKYALLKI (67 aa)) is the S4 RNA-binding domain.

Belongs to the class-I aminoacyl-tRNA synthetase family. TyrS type 1 subfamily. As to quaternary structure, homodimer.

The protein localises to the cytoplasm. It carries out the reaction tRNA(Tyr) + L-tyrosine + ATP = L-tyrosyl-tRNA(Tyr) + AMP + diphosphate + H(+). In terms of biological role, catalyzes the attachment of tyrosine to tRNA(Tyr) in a two-step reaction: tyrosine is first activated by ATP to form Tyr-AMP and then transferred to the acceptor end of tRNA(Tyr). The protein is Tyrosine--tRNA ligase of Rhodopirellula baltica (strain DSM 10527 / NCIMB 13988 / SH1).